A 275-amino-acid polypeptide reads, in one-letter code: 2,3,4,5-tetrahydropyridine-2,6-dicarboxylate N-succinyltransferase (275 aa).

Positions 105 and 142 each coordinate substrate.

The protein belongs to the transferase hexapeptide repeat family. In terms of assembly, homotrimer.

The protein localises to the cytoplasm. The catalysed reaction is (S)-2,3,4,5-tetrahydrodipicolinate + succinyl-CoA + H2O = (S)-2-succinylamino-6-oxoheptanedioate + CoA. It functions in the pathway amino-acid biosynthesis; L-lysine biosynthesis via DAP pathway; LL-2,6-diaminopimelate from (S)-tetrahydrodipicolinate (succinylase route): step 1/3. The protein is 2,3,4,5-tetrahydropyridine-2,6-dicarboxylate N-succinyltransferase of Histophilus somni (strain 129Pt) (Haemophilus somnus).